The primary structure comprises 205 residues: N-(5'-phosphoribosyl)anthranilate isomerase (205 aa).

This sequence belongs to the TrpF family.

It catalyses the reaction N-(5-phospho-beta-D-ribosyl)anthranilate = 1-(2-carboxyphenylamino)-1-deoxy-D-ribulose 5-phosphate. The protein operates within amino-acid biosynthesis; L-tryptophan biosynthesis; L-tryptophan from chorismate: step 3/5. This is N-(5'-phosphoribosyl)anthranilate isomerase from Thermotoga neapolitana (strain ATCC 49049 / DSM 4359 / NBRC 107923 / NS-E).